The chain runs to 43 residues: Thymosin beta-12 (43 aa).

Composition is skewed to basic and acidic residues over residues 1–25 and 33–43; these read MSDK…ETQE and ETIEQEKQATA. The tract at residues 1-43 is disordered; that stretch reads MSDKPDLAEVSNFDKTKLKKTETQEKNPLPTKETIEQEKQATA. Residue Ser2 is modified to N-acetylserine.

Belongs to the thymosin beta family.

It localises to the cytoplasm. It is found in the cytoskeleton. Its function is as follows. Plays an important role in the organization of the cytoskeleton. Binds to and sequesters actin monomers (G actin) and therefore inhibits actin polymerization. The sequence is that of Thymosin beta-12 from Oncorhynchus mykiss (Rainbow trout).